The following is a 278-amino-acid chain: Small ribosomal subunit protein uS3 (278 aa).

The 69-residue stretch at 39–107 (LRKAISKKYV…KVQLNIVEIS (69 aa)) folds into the KH type-2 domain. The segment at 255 to 278 (AEIPAEEKPKRVVKKAENITKEEE) is disordered.

Belongs to the universal ribosomal protein uS3 family. In terms of assembly, part of the 30S ribosomal subunit. Forms a tight complex with proteins S10 and S14.

In terms of biological role, binds the lower part of the 30S subunit head. Binds mRNA in the 70S ribosome, positioning it for translation. This Dehalococcoides mccartyi (strain CBDB1) protein is Small ribosomal subunit protein uS3.